The chain runs to 981 residues: GPI ethanolamine phosphate transferase 1 (981 aa).

At 1–6 (MAGSSR) the chain is on the cytoplasmic side. A helical transmembrane segment spans residues 7-27 (IGFMAIAVAFHLVYILSIFDI). Over 28–464 (YFVSPIVTGM…LQTYDWLFLR (437 aa)) the chain is Lumenal. Residues Asn-148, Asn-211, and Asn-295 are each glycosylated (N-linked (GlcNAc...) asparagine). A helical membrane pass occupies residues 465-485 (ALITIGYLGWMAYATTTVLSL). The Cytoplasmic segment spans residues 486–496 (YVVKESMSPQR). The chain crosses the membrane as a helical span at residues 497–517 (TLLGSAFFLSLLVALYSSFII). The Lumenal portion of the chain corresponds to 518–519 (SK). Residues 520–540 (SPPAYYLYAFFPVLFWEEVYA) traverse the membrane as a helical segment. At 541-560 (RRANVAKGFQALFGHVKSGG) the chain is on the cytoplasmic side. The chain crosses the membrane as a helical span at residues 561-581 (AVVALVFNVVLYLGVIQSLAL). Residues 582 to 587 (AYIHRE) lie on the Lumenal side of the membrane. The helical transmembrane segment at 588 to 608 (ILTGLFVLGAFWPMTQGISFL) threads the bilayer. Topologically, residues 609–611 (RSH) are cytoplasmic. The helical transmembrane segment at 612 to 632 (LFLSMLWFFSCLAMSTFTLLP) threads the bilayer. The Lumenal portion of the chain corresponds to 633–638 (AMKVED). Residues 639–659 (IPLIMAGGGLMTFVGLAYLVL) form a helical membrane-spanning segment. Topologically, residues 660-681 (EDFILSDVSSSKTKLKRLHTSR) are cytoplasmic. Residues 682–702 (TLLGIQVGLIILAMLVTHSSA) form a helical membrane-spanning segment. Residues 703 to 708 (TSLQAK) are Lumenal-facing. The helical transmembrane segment at 709-729 (LGLPKGNQIVGWFVLVTSLLM) threads the bilayer. Residues 730–744 (PLAYRLQPNSHYMHR) lie on the Cytoplasmic side of the membrane. Residues 745–767 (LAIIFLTCAPTFVILTISYEGLF) form a helical membrane-spanning segment. Topologically, residues 768-819 (YVAFSITLLSWVRLEYAVDAFTQEKAKKQATVAGSQQHTPSTFRPLSLSDAR) are lumenal. Residues 820–840 (IALFFMVLLQSAFFSTGNIAS) traverse the membrane as a helical segment. The Cytoplasmic segment spans residues 841–862 (ISSFSLESVSRLIPVFDPFSQG). A helical membrane pass occupies residues 863 to 883 (ALLILKIIIPFFLISANLGVL). At 884–892 (NKRLGVAPS) the chain is on the lumenal side. A helical membrane pass occupies residues 893–913 (AIFMVVLTASDVLTLYFFWVV). At 914 to 929 (KDEGSWLEIGSTITHF) the chain is on the cytoplasmic side. Residues 930 to 950 (AIASFLCVFVAALEFVSAAFI) traverse the membrane as a helical segment. Topologically, residues 951 to 981 (AGIEVEDTKSAALTSASTKADEKVPPVAGAE) are lumenal.

This sequence belongs to the PIGG/PIGN/PIGO family. PIGN subfamily.

The protein resides in the endoplasmic reticulum membrane. It functions in the pathway glycolipid biosynthesis; glycosylphosphatidylinositol-anchor biosynthesis. In terms of biological role, ethanolamine phosphate transferase involved in glycosylphosphatidylinositol-anchor biosynthesis. Transfers ethanolamine phosphate to the first alpha-1,4-linked mannose of the glycosylphosphatidylinositol precursor of GPI-anchor. This Gibberella zeae (strain ATCC MYA-4620 / CBS 123657 / FGSC 9075 / NRRL 31084 / PH-1) (Wheat head blight fungus) protein is GPI ethanolamine phosphate transferase 1 (MCD4).